A 379-amino-acid polypeptide reads, in one-letter code: Cytochrome b (379 aa).

4 helical membrane-spanning segments follow: residues 33–53 (FGSLLGMCLVIQILTGLFLAM), 77–98 (WLIRYLHANGASMFFICLFIHV), 113–133 (WNIGIILLLTTMATAFVGYVL), and 178–198 (FFAFHFILPFIIAAFALVHLL). Positions 83 and 97 each coordinate heme b. Residues H182 and H196 each coordinate heme b. H201 is an a ubiquinone binding site. 4 helical membrane passes run 226–246 (TKDLLGIFLLLLVLMILALFF), 288–308 (LGGVLALVLSILILATFPLLN), 320–340 (VTQVIYWIFIANLLVLTWIGG), and 347–367 (FTTIGQIASITYFAIIIILIP).

It belongs to the cytochrome b family. In terms of assembly, the cytochrome bc1 complex contains 11 subunits: 3 respiratory subunits (MT-CYB, CYC1 and UQCRFS1), 2 core proteins (UQCRC1 and UQCRC2) and 6 low-molecular weight proteins (UQCRH/QCR6, UQCRB/QCR7, UQCRQ/QCR8, UQCR10/QCR9, UQCR11/QCR10 and a cleavage product of UQCRFS1). This cytochrome bc1 complex then forms a dimer. Requires heme b as cofactor.

It is found in the mitochondrion inner membrane. Functionally, component of the ubiquinol-cytochrome c reductase complex (complex III or cytochrome b-c1 complex) that is part of the mitochondrial respiratory chain. The b-c1 complex mediates electron transfer from ubiquinol to cytochrome c. Contributes to the generation of a proton gradient across the mitochondrial membrane that is then used for ATP synthesis. This is Cytochrome b (MT-CYB) from Akodon paranaensis (Parana grass mouse).